The chain runs to 33 residues: Mu-theraphotoxin-Os1a (33 aa).

3 disulfide bridges follow: Cys-2-Cys-17, Cys-9-Cys-22, and Cys-16-Cys-29. Residue Leu-33 is modified to Leucine amide.

The protein belongs to the neurotoxin 10 (Hwtx-1) family. 14 (Hntx-1) subfamily. Monomer. As to expression, expressed by the venom gland.

It localises to the secreted. Potently and reversibly inhibits some human voltage-gated sodium channels (Nav1.1/SCN1A (IC(50)=72.0 nM), Nav1.2/SCN2A (IC(50)=75.5 nM), Nav1.6/SCN8A (IC(50)=115.0 nM), Nav1.7/SCN9A (IC(50)=52.7-129.5 nM), Nav1.3/SCN3A (IC(50)=306.6 nM)). The hNav1.7/SCN9A channel inhibition occurs without any change in steady-state inactivation- and conductance-voltage relationships. On adult mouse DRG neurons, this toxin is approximately 1000-fold more efficient to inhibit tetrodotoxin (TTX)-sensitive than TTX-resistant sodium currents. In vivo, this toxin exhibits analgesic effects in mice pain models. The polypeptide is Mu-theraphotoxin-Os1a (Omothymus schioedtei (Malaysian earth tiger tarantula)).